The following is a 595-amino-acid chain: Chaperone protein HscA homolog (595 aa).

This sequence belongs to the heat shock protein 70 family.

Its function is as follows. Chaperone involved in the maturation of iron-sulfur cluster-containing proteins. Has a low intrinsic ATPase activity which is markedly stimulated by HscB. The polypeptide is Chaperone protein HscA homolog (Rickettsia peacockii (strain Rustic)).